Consider the following 427-residue polypeptide: Glutamate-1-semialdehyde 2,1-aminomutase (427 aa).

N6-(pyridoxal phosphate)lysine is present on K265.

This sequence belongs to the class-III pyridoxal-phosphate-dependent aminotransferase family. HemL subfamily. Homodimer. The cofactor is pyridoxal 5'-phosphate.

It localises to the cytoplasm. It carries out the reaction (S)-4-amino-5-oxopentanoate = 5-aminolevulinate. Its pathway is porphyrin-containing compound metabolism; protoporphyrin-IX biosynthesis; 5-aminolevulinate from L-glutamyl-tRNA(Glu): step 2/2. The polypeptide is Glutamate-1-semialdehyde 2,1-aminomutase (Neisseria meningitidis serogroup B (strain ATCC BAA-335 / MC58)).